A 426-amino-acid chain; its full sequence is Serine/threonine-protein kinase ssn3 (426 aa).

The Protein kinase domain maps to Y41–F368. ATP contacts are provided by residues I47–V55 and K71. D173 serves as the catalytic Proton acceptor. Residues R390 to E426 form a disordered region.

The protein belongs to the protein kinase superfamily. CMGC Ser/Thr protein kinase family. CDC2/CDKX subfamily. In terms of assembly, component of the srb8-11 complex, a regulatory module of the Mediator complex. Requires Mg(2+) as cofactor.

Its subcellular location is the nucleus. It catalyses the reaction L-seryl-[protein] + ATP = O-phospho-L-seryl-[protein] + ADP + H(+). It carries out the reaction L-threonyl-[protein] + ATP = O-phospho-L-threonyl-[protein] + ADP + H(+). The catalysed reaction is [DNA-directed RNA polymerase] + ATP = phospho-[DNA-directed RNA polymerase] + ADP + H(+). Its function is as follows. Component of the srb8-11 complex. The srb8-11 complex is a regulatory module of the Mediator complex which is itself dependent transcription. The srb8-11 complex may be involved in the transcriptional repression of a subset of genes regulated by Mediator. It may inhibit the association of the Mediator complex with RNA polymerase II to form the holoenzyme complex. The srb8-11 complex phosphorylates the C-terminal domain (CTD) of the largest subunit of RNA polymerase II. This is Serine/threonine-protein kinase ssn3 (ssn3) from Neosartorya fischeri (strain ATCC 1020 / DSM 3700 / CBS 544.65 / FGSC A1164 / JCM 1740 / NRRL 181 / WB 181) (Aspergillus fischerianus).